The sequence spans 860 residues: MATDLGELLVPYMPTIRVPRTGDRVFKSECAFSYDSPESEGGLYVCMNSFLGFGREHVERHYRKTGQSVYMHLKRHVKEKATGAAGGAIPRRRNGKVFLDLELNRDFNGDDYEYEDEAKLVIFPDHYEIPLPNIEELPALVTIACDAVLNAPSPYKKQESDSWEEEIQVSRHARSLRQLDNGVRIPPSGWKCAKCEMRENLWLNLTDGSVLCGKWFFDGSGGNGHALEHYRESNFPLAVKLNTITPDGADIYSFDEEEAVLDPHISEHLLHFGIDMLQMQRTENGHHTDNHVQPRISDWEVIQEAGLKLKPVYGSGYTGIKNLGNSCYLSTTMQVLFSIPEFQRAYAGNLQRIFDYSPLDPTQDFNTQMAKLGHGLLSGQYSKPPMKSELIEQVMKEEHKQQQQRGISPKMFKALVSKGHPEFSSNRQQDAHEFLLHLINLVERNNSGSENPSDVFRFIVEERTQCCQSQKVRYTQRVDYLMQLPVPLEAASNREELIAYEGKRKEAEENMRPLPEVVRARVPFTACLQAFTEPENVPDFWSSALQAKSAGVKTSRFATFPEYMIVQLKKFTFGVDWVPKKLDMSVDVPDFLDLNRLRATGLQAGEEELPDLTPPIVIPEDTRDSSTNNSLESPEIDESSVMQLAEMGFPLEACRKAVYYTGNMGAEMAFNWIIAHMEEPDFAEPLAVPTYMESDLPSPSLPTTSALDNQPPEESISILTSMGFPRHHTIQALKASNNNLERALDWIFTHPDCEDESEAMSDTADTEPNDNSFSNANAHTDSSLSPDQDLSSPRVRDGPGRYELFAFISHMGTSTMSGHYVCHIKKEGRWLIYNDHKVCLSERPPKDLGYMYFYRRLSSC.

Residues glutamine 168–methionine 276 form a UBP-type; degenerate zinc finger. Residues cysteine 192, cysteine 195, cysteine 212, and histidine 225 each contribute to the Zn(2+) site. The USP domain maps to threonine 318–leucine 857. Residue cysteine 327 is the Nucleophile of the active site. The tract at residues aspartate 611–isoleucine 636 is disordered. UBA domains are found at residues glutamate 635–histidine 676 and glutamine 710–histidine 750. A compositionally biased stretch (acidic residues) spans aspartate 755 to proline 768. The interval aspartate 755–valine 795 is disordered. The span at asparagine 769–threonine 780 shows a compositional bias: polar residues. Over residues aspartate 781–proline 793 the composition is skewed to low complexity. Residue histidine 819 is the Proton acceptor of the active site.

This sequence belongs to the peptidase C19 family.

The catalysed reaction is Thiol-dependent hydrolysis of ester, thioester, amide, peptide and isopeptide bonds formed by the C-terminal Gly of ubiquitin (a 76-residue protein attached to proteins as an intracellular targeting signal).. Its activity is regulated as follows. Specifically inhibited by spautin-1 (specific and potent autophagy inhibitor-1), a derivative of MBCQ that binds to usp13 and inhibits deubiquitinase activity. Deubiquitinase that mediates deubiquitination of target proteins and is involved in various processes such as autophagy and endoplasmic reticulum-associated degradation (ERAD). The protein is Ubiquitin carboxyl-terminal hydrolase 13 (usp13) of Danio rerio (Zebrafish).